We begin with the raw amino-acid sequence, 499 residues long: GTPase Der (499 aa).

Positions 3 to 166 (PVIALVGRPN…QALGIFPKDN (164 aa)) constitute an EngA-type G 1 domain. GTP contacts are provided by residues 9–16 (GRPNVGKS), 56–60 (DTGGI), and 118–121 (NKVD). The segment at 166–199 (NADENAEGEEGGELAEGEEVVAEGQEPKRIPGPS) is disordered. Positions 168–186 (DENAEGEEGGELAEGEEVV) are enriched in acidic residues. Positions 190 to 199 (QEPKRIPGPS) are enriched in basic and acidic residues. Positions 204 to 377 (IKIAIIGRPN…SVQAAFKSAI (174 aa)) constitute an EngA-type G 2 domain. GTP-binding positions include 210–217 (GRPNVGKS), 257–261 (DTAGV), and 322–325 (NKWD). Residues 378–462 (TRWPTSRLTQ…PIRIEYKGGD (85 aa)) form the KH-like domain. The span at 459–472 (KGGDNPYEGKKNTL) shows a compositional bias: basic and acidic residues. The tract at residues 459–499 (KGGDNPYEGKKNTLTDRQVNKKRRLMSHHKKAEKKRRDKKR) is disordered. A compositionally biased stretch (basic residues) spans 478–499 (NKKRRLMSHHKKAEKKRRDKKR).

This sequence belongs to the TRAFAC class TrmE-Era-EngA-EngB-Septin-like GTPase superfamily. EngA (Der) GTPase family. In terms of assembly, associates with the 50S ribosomal subunit.

In terms of biological role, GTPase that plays an essential role in the late steps of ribosome biogenesis. The polypeptide is GTPase Der (Stutzerimonas stutzeri (strain A1501) (Pseudomonas stutzeri)).